The primary structure comprises 269 residues: Regulatory protein RecX (269 aa).

The protein belongs to the RecX family.

Its subcellular location is the cytoplasm. Its function is as follows. Modulates RecA activity. The protein is Regulatory protein RecX of Listeria monocytogenes serotype 4a (strain HCC23).